Here is a 387-residue protein sequence, read N- to C-terminus: Large ribosomal subunit protein uL3 (387 aa).

This sequence belongs to the universal ribosomal protein uL3 family.

The protein resides in the cytoplasm. The chain is Large ribosomal subunit protein uL3 (RPL3) from Eremothecium gossypii (strain ATCC 10895 / CBS 109.51 / FGSC 9923 / NRRL Y-1056) (Yeast).